A 504-amino-acid polypeptide reads, in one-letter code: Arabinose import ATP-binding protein AraG (504 aa).

2 ABC transporter domains span residues 8 to 243 (LSFR…MVGR) and 256 to 499 (YGEE…MPKV). 40–47 (GENGAGKS) provides a ligand contact to ATP.

Belongs to the ABC transporter superfamily. Arabinose importer (TC 3.A.1.2.2) family. In terms of assembly, the complex is composed of two ATP-binding proteins (AraG), two transmembrane proteins (AraH) and a solute-binding protein (AraF).

Its subcellular location is the cell inner membrane. It catalyses the reaction L-arabinose(out) + ATP + H2O = L-arabinose(in) + ADP + phosphate + H(+). Part of the ABC transporter complex AraFGH involved in arabinose import. Responsible for energy coupling to the transport system. The protein is Arabinose import ATP-binding protein AraG of Escherichia coli (strain UTI89 / UPEC).